The chain runs to 446 residues: NADH-ubiquinone oxidoreductase chain 4 (446 aa).

13 helical membrane passes run 4 to 24 (IIFF…YWMV), 56 to 76 (MLSY…LLAS), 93 to 113 (IIIL…FMFY), 114 to 134 (LFFE…GYQP), 139 to 159 (AGLY…IGIF), 182 to 202 (LLYF…LVHL), 218 to 238 (ILAG…ISFL), 245 to 265 (YSFV…LVCL), 272 to 292 (ALIA…LLTM), 297 to 317 (LCGS…LFCL), 330 to 350 (MLIN…WFLL), 373 to 393 (IVSW…FSAA), and 426 to 446 (LLHW…MLWL).

Belongs to the complex I subunit 4 family.

The protein resides in the mitochondrion membrane. It carries out the reaction a ubiquinone + NADH + 5 H(+)(in) = a ubiquinol + NAD(+) + 4 H(+)(out). Core subunit of the mitochondrial membrane respiratory chain NADH dehydrogenase (Complex I) that is believed to belong to the minimal assembly required for catalysis. Complex I functions in the transfer of electrons from NADH to the respiratory chain. The immediate electron acceptor for the enzyme is believed to be ubiquinone. The polypeptide is NADH-ubiquinone oxidoreductase chain 4 (mt:ND4) (Drosophila melanogaster (Fruit fly)).